We begin with the raw amino-acid sequence, 367 residues long: Anthranilate phosphoribosyltransferase (367 aa).

The segment covering 1–17 (MVLSSEASSAADHSAAA) has biased composition (low complexity). The segment at 1 to 22 (MVLSSEASSAADHSAAAPIPTS) is disordered. 5-phospho-alpha-D-ribose 1-diphosphate is bound by residues glycine 104, 107 to 108 (GD), threonine 112, 114 to 117 (NLST), 132 to 140 (KHGNRAASS), and glycine 144. Glycine 104 serves as a coordination point for anthranilate. Residue serine 116 coordinates Mg(2+). Residue asparagine 135 coordinates anthranilate. Arginine 190 contributes to the anthranilate binding site. The Mg(2+) site is built by aspartate 248 and glutamate 249.

The protein belongs to the anthranilate phosphoribosyltransferase family. In terms of assembly, homodimer. Requires Mg(2+) as cofactor.

The enzyme catalyses N-(5-phospho-beta-D-ribosyl)anthranilate + diphosphate = 5-phospho-alpha-D-ribose 1-diphosphate + anthranilate. It functions in the pathway amino-acid biosynthesis; L-tryptophan biosynthesis; L-tryptophan from chorismate: step 2/5. Catalyzes the transfer of the phosphoribosyl group of 5-phosphorylribose-1-pyrophosphate (PRPP) to anthranilate to yield N-(5'-phosphoribosyl)-anthranilate (PRA). This Mycobacterium marinum (strain ATCC BAA-535 / M) protein is Anthranilate phosphoribosyltransferase.